Consider the following 372-residue polypeptide: 4-hydroxy-3-methylbut-2-en-1-yl diphosphate synthase (flavodoxin) (372 aa).

The [4Fe-4S] cluster site is built by Cys270, Cys273, Cys305, and Glu312.

Belongs to the IspG family. It depends on [4Fe-4S] cluster as a cofactor.

It carries out the reaction (2E)-4-hydroxy-3-methylbut-2-enyl diphosphate + oxidized [flavodoxin] + H2O + 2 H(+) = 2-C-methyl-D-erythritol 2,4-cyclic diphosphate + reduced [flavodoxin]. It functions in the pathway isoprenoid biosynthesis; isopentenyl diphosphate biosynthesis via DXP pathway; isopentenyl diphosphate from 1-deoxy-D-xylulose 5-phosphate: step 5/6. Functionally, converts 2C-methyl-D-erythritol 2,4-cyclodiphosphate (ME-2,4cPP) into 1-hydroxy-2-methyl-2-(E)-butenyl 4-diphosphate. In Salmonella schwarzengrund (strain CVM19633), this protein is 4-hydroxy-3-methylbut-2-en-1-yl diphosphate synthase (flavodoxin).